A 150-amino-acid polypeptide reads, in one-letter code: Transcriptional repressor NrdR (150 aa).

The segment at 3–34 (CPFCNFEESKVVDSRATDDNTTIRRRRECLNC) is a zinc-finger region. One can recognise an ATP-cone domain in the interval 49–139 (VLVVKKDLAR…VYRQFKDINT (91 aa)).

This sequence belongs to the NrdR family. The cofactor is Zn(2+).

Its function is as follows. Negatively regulates transcription of bacterial ribonucleotide reductase nrd genes and operons by binding to NrdR-boxes. The sequence is that of Transcriptional repressor NrdR from Clostridium botulinum (strain Eklund 17B / Type B).